The primary structure comprises 298 residues: Zinc import ATP-binding protein ZnuC (298 aa).

One can recognise an ABC transporter domain in the interval 17–232; the sequence is IELRNAGVYR…PEYVRLFGSR (216 aa). Residue 49-56 coordinates ATP; that stretch reads GPNGAGKS. A disordered region spans residues 273-298; sequence RGHCHVEDGHHHDHEHHHHEGGQPRA. The segment covering 276–298 has biased composition (basic and acidic residues); sequence CHVEDGHHHDHEHHHHEGGQPRA.

Belongs to the ABC transporter superfamily. Zinc importer (TC 3.A.1.15.5) family. In terms of assembly, the complex is composed of two ATP-binding proteins (ZnuC), two transmembrane proteins (ZnuB) and a solute-binding protein (ZnuA).

The protein resides in the cell inner membrane. The enzyme catalyses Zn(2+)(out) + ATP(in) + H2O(in) = Zn(2+)(in) + ADP(in) + phosphate(in) + H(+)(in). Its function is as follows. Part of the ABC transporter complex ZnuABC involved in zinc import. Responsible for energy coupling to the transport system. This is Zinc import ATP-binding protein ZnuC from Brucella suis biovar 1 (strain 1330).